Consider the following 100-residue polypeptide: Gas vesicle protein J (100 aa).

This sequence belongs to the gas vesicle GvpA family. Interacts with GvpA.

Its subcellular location is the gas vesicle. In terms of biological role, a minor component of the gas vesicle, might be involved in nucleating gas vesicle formation. This protein could be important for the shape determination of the gas vesicle. Gas vesicles (GV) are hollow, gas filled proteinaceous nanostructures. During planktonic growth they allow positioning of the organism at a favorable depth for light or nutrient acquisition. Its function is as follows. When a minimal gvp locus (gvpA2-gvpR-gvpN-gvpF-gvpG-gvpL-gvpS-gvpK-gvpJ-gvpT-gvpU, called pNL29) is expressed in E.coli gas vesicles are made. The protein is Gas vesicle protein J of Priestia megaterium (Bacillus megaterium).